The primary structure comprises 239 residues: MRIIGLTGSIASGKSTVSAMLREPGAAVIDADAIVHHLQLPGTPVFESIVREFGPGVVRPDGSLDRQALGRIVFADPGRRRALEAIVHPAVRAEIWRQVEQYRREGRPAVVLDVPLLYESGWDRQVDEVWVVWVDAETQKARLIARSGLSPEEAEARIAAQMSLDEKARRADRIIDNRGSLDRTRAQVEAAWRAACGGEGGEPAAGSSAHHGAGSVDPGAGPCDGPGAAPEAERRGGDR.

Residues 3 to 206 form the DPCK domain; sequence IIGLTGSIAS…GGEGGEPAAG (204 aa). Residue 11–16 coordinates ATP; that stretch reads ASGKST. The interval 197-239 is disordered; the sequence is GGEGGEPAAGSSAHHGAGSVDPGAGPCDGPGAAPEAERRGGDR. The span at 204–230 shows a compositional bias: low complexity; sequence AAGSSAHHGAGSVDPGAGPCDGPGAAP.

It belongs to the CoaE family.

Its subcellular location is the cytoplasm. It carries out the reaction 3'-dephospho-CoA + ATP = ADP + CoA + H(+). It functions in the pathway cofactor biosynthesis; coenzyme A biosynthesis; CoA from (R)-pantothenate: step 5/5. Catalyzes the phosphorylation of the 3'-hydroxyl group of dephosphocoenzyme A to form coenzyme A. This Symbiobacterium thermophilum (strain DSM 24528 / JCM 14929 / IAM 14863 / T) protein is Dephospho-CoA kinase.